Reading from the N-terminus, the 132-residue chain is uncharacterized protein (132 aa).

2 disordered regions span residues 36-69 (GLASTPSLRPRPRPWEGQLQHQSHQGSLDKPNIS) and 97-132 (QINDSDNDNDDNNNDNNKGDGNDDDNNTVTANPTAR). Ser-101 bears the Phosphoserine mark.

As to quaternary structure, copurifies with proteins HOL1, MMP1, PEX7 and PLB1.

This is an uncharacterized protein from Saccharomyces cerevisiae (strain ATCC 204508 / S288c) (Baker's yeast).